A 415-amino-acid polypeptide reads, in one-letter code: MTSSKTGQITIRSIGAGGDGVANLPDGQIYVPFTLPGEVVNVARDKNRATLMALLEASPERQNPACRHFEDCGGCALQHWQDEPYRLWKRELVVGALKGRGTDVEVAPLVACNPHTRRRAVFAARKTEKGVLLGFNRHQSHEIIDIVECPVTVPEIIARLDDLREVGALLAPGSGPFKLAATLTESGLDLAASGCGKLNDEQRRALTALVIKKDFARLSHEGEIIVEPKKPLIHFGKVPVPIPPGCFLQATAEAEETMAALVLAHLGKARRVADLFCGVGTFALRIAEKSAVHAVENDAAALAALDRGVRHVQGLKPVSIERRDLFRRPLMTKELLPYNAVVFDPPRAGAEEQALELAKSKVEKVVAISCNPVTLARDLAILQKGGYRIERVTPIDQFLWSAHVEAVAVLTKGRQ.

[4Fe-4S] cluster is bound by residues cysteine 66, cysteine 72, cysteine 75, and cysteine 149. Residues glutamine 249, phenylalanine 276, glutamate 296, and aspartate 344 each coordinate S-adenosyl-L-methionine. The active-site Nucleophile is the cysteine 370.

Belongs to the class I-like SAM-binding methyltransferase superfamily. RNA M5U methyltransferase family.

This is an uncharacterized protein from Brucella melitensis biotype 1 (strain ATCC 23456 / CCUG 17765 / NCTC 10094 / 16M).